Here is a 319-residue protein sequence, read N- to C-terminus: Oxaloacetate tautomerase fahd2, mitochondrial (319 aa).

A mitochondrion-targeting transit peptide spans 1–31 (MLTQTRVALRVLKNAHLTLPKRNISQSPALS). Residues Glu164, Glu166, and Asp195 each coordinate Mg(2+).

Belongs to the FAH family. Mg(2+) serves as cofactor. Mn(2+) is required as a cofactor.

The protein localises to the mitochondrion. It carries out the reaction oxaloacetate = enol-oxaloacetate. Tautomerase that converts enol-oxaloacetate, a strong inhibitor of succinate dehydrogenase, to the physiological keto form of oxaloacetate. It is thereby required to maximize aerobic respiration efficiency by preventing succinate dehydrogenase inhibition. This chain is Oxaloacetate tautomerase fahd2, mitochondrial (fahd2), found in Xenopus laevis (African clawed frog).